We begin with the raw amino-acid sequence, 804 residues long: Probable replication endonuclease from prophage-like region 2 (804 aa).

Residues Tyr-503 and Tyr-507 each act as O-(5'-phospho-DNA)-tyrosine intermediate in the active site.

This sequence belongs to the phage GPA family.

Functionally, possible endonuclease which induces a single-strand cut and initiates DNA replication. This chain is Probable replication endonuclease from prophage-like region 2, found in Salmonella typhi.